Reading from the N-terminus, the 779-residue chain is Ribonucleoside-diphosphate reductase large subunit (779 aa).

Substrate-binding positions include Ser-178, 193-194, Gly-222, 420-424, and 614-618; these read SC, NLCIE, and PTATS. Residues Cys-194 and Cys-440 are joined by a disulfide bond. Asn-420 acts as the Proton acceptor in catalysis. The active-site Cysteine radical intermediate is the Cys-422. The active-site Proton acceptor is Glu-424.

This sequence belongs to the ribonucleoside diphosphate reductase large chain family. As to quaternary structure, heterotetramer composed of a homodimer of the large subunit (R1) and a homodimer of the small subunit (R2). Larger multisubunit protein complex are also active, composed of (R1)n(R2)n.

It carries out the reaction a 2'-deoxyribonucleoside 5'-diphosphate + [thioredoxin]-disulfide + H2O = a ribonucleoside 5'-diphosphate + [thioredoxin]-dithiol. Under complex allosteric control mediated by deoxynucleoside triphosphates and ATP binding. The type of nucleotide bound at the specificity site determines substrate preference. It seems probable that ATP makes the enzyme reduce CDP and UDP, dGTP favors ADP reduction and dTTP favors GDP reduction. Functionally, ribonucleoside-diphosphate reductase holoenzyme provides the precursors necessary for viral DNA synthesis. Allows virus growth in non-dividing cells. Catalyzes the biosynthesis of deoxyribonucleotides from the corresponding ribonucleotides. In Ornithodoros (relapsing fever ticks), this protein is Ribonucleoside-diphosphate reductase large subunit.